The primary structure comprises 385 residues: S-adenosylmethionine synthase (385 aa).

His15 lines the ATP pocket. Position 17 (Asp17) interacts with Mg(2+). A K(+)-binding site is contributed by Glu43. Residues Glu56 and Gln99 each coordinate L-methionine. The segment at 99-109 (QSPEIAQGVDE) is flexible loop. ATP is bound by residues 164-166 (DAK), 230-231 (RF), Asp239, 245-246 (RK), Ala262, and Lys266. An L-methionine-binding site is contributed by Asp239. Lys270 is a binding site for L-methionine.

The protein belongs to the AdoMet synthase family. Homotetramer; dimer of dimers. Mg(2+) is required as a cofactor. It depends on K(+) as a cofactor.

The protein localises to the cytoplasm. The enzyme catalyses L-methionine + ATP + H2O = S-adenosyl-L-methionine + phosphate + diphosphate. It participates in amino-acid biosynthesis; S-adenosyl-L-methionine biosynthesis; S-adenosyl-L-methionine from L-methionine: step 1/1. Functionally, catalyzes the formation of S-adenosylmethionine (AdoMet) from methionine and ATP. The overall synthetic reaction is composed of two sequential steps, AdoMet formation and the subsequent tripolyphosphate hydrolysis which occurs prior to release of AdoMet from the enzyme. The sequence is that of S-adenosylmethionine synthase from Hydrogenovibrio crunogenus (strain DSM 25203 / XCL-2) (Thiomicrospira crunogena).